The chain runs to 155 residues: Ribosomal RNA large subunit methyltransferase H (155 aa).

S-adenosyl-L-methionine-binding positions include Leu-72, Gly-103, and Leu-122 to Phe-127.

The protein belongs to the RNA methyltransferase RlmH family. As to quaternary structure, homodimer.

Its subcellular location is the cytoplasm. It carries out the reaction pseudouridine(1915) in 23S rRNA + S-adenosyl-L-methionine = N(3)-methylpseudouridine(1915) in 23S rRNA + S-adenosyl-L-homocysteine + H(+). Specifically methylates the pseudouridine at position 1915 (m3Psi1915) in 23S rRNA. This Alkalilimnicola ehrlichii (strain ATCC BAA-1101 / DSM 17681 / MLHE-1) protein is Ribosomal RNA large subunit methyltransferase H.